The primary structure comprises 152 residues: Protein-export protein SecB (152 aa).

The protein belongs to the SecB family. In terms of assembly, homotetramer, a dimer of dimers. One homotetramer interacts with 1 SecA dimer.

The protein localises to the cytoplasm. Functionally, one of the proteins required for the normal export of preproteins out of the cell cytoplasm. It is a molecular chaperone that binds to a subset of precursor proteins, maintaining them in a translocation-competent state. It also specifically binds to its receptor SecA. The chain is Protein-export protein SecB from Rickettsia bellii (strain RML369-C).